Reading from the N-terminus, the 347-residue chain is Ribosomal RNA small subunit methyltransferase C (347 aa).

It belongs to the methyltransferase superfamily. RsmC family. Monomer.

Its subcellular location is the cytoplasm. It catalyses the reaction guanosine(1207) in 16S rRNA + S-adenosyl-L-methionine = N(2)-methylguanosine(1207) in 16S rRNA + S-adenosyl-L-homocysteine + H(+). Functionally, specifically methylates the guanine in position 1207 of 16S rRNA in the 30S particle. The protein is Ribosomal RNA small subunit methyltransferase C of Yersinia pseudotuberculosis serotype O:1b (strain IP 31758).